The sequence spans 73 residues: Putative membrane protein insertion efficiency factor (73 aa).

The protein belongs to the UPF0161 family.

The protein localises to the cell inner membrane. Functionally, could be involved in insertion of integral membrane proteins into the membrane. In Neisseria meningitidis serogroup C (strain 053442), this protein is Putative membrane protein insertion efficiency factor.